The following is a 561-amino-acid chain: MAKINFFAFGGQDERGKNCFVLEINNDVFIFNVGSLTPTTAVLGVKKIIPDFSWIQENQARIKGIFIGNPVTENIGSLEFLFHTVGFFPIYTSTIGAVVIKTKIHENKLNIPHDELEIHELKPLETVKIGHHNITPFKVSSSIPSSFGFALHTDDGYIVYVDDFIVLNDKNIAFENQLNQIIPQVANKTLLLITGVGLVGRNTGFTTPKHKSLEQLNRIIASAKGRVFAACYDSNAYSVMTLAQIARMQNRPFVIYSHSFVHLFNAIVRQKLFNNTHLNTISIEEINNSTNAIVVLTAPPDKLYAKLFKIGTNEDERVRYRKTDSFIFMIPRIAGYEELEAQILDDVARNEVSYYNLGREILSINASDEDMKFLVTSLKPKYIIPTSGLYRDFINFTMVMKQAGVEQSQVLIPFNGEVLAINHKQIDNKKRELKLNPKCVDSAGLQEIGASIMFERDQMSEAGVVTIIIYYDSKKSEFLNEITYSFLGVSLDSNNQVKLKTKMEELIRKQINDIKDFTTIKRRLGKDTSKELKVSIKRAVMNLFTKMTAKAPLILSTIISI.

Helical transmembrane passes span 29 to 49 and 80 to 100; these read FIFN…KKII and FLFH…AVVI.

It localises to the cell membrane. This is an uncharacterized protein from Mycoplasma pneumoniae (strain ATCC 29342 / M129 / Subtype 1) (Mycoplasmoides pneumoniae).